The chain runs to 612 residues: Threonine--tRNA ligase (612 aa).

Residues 218 to 509 form a catalytic region; sequence DHRKLGVELG…LSEHFWGNFP (292 aa). The Zn(2+) site is built by Cys310, His361, and His486.

This sequence belongs to the class-II aminoacyl-tRNA synthetase family. In terms of assembly, homodimer. Zn(2+) serves as cofactor.

It localises to the cytoplasm. It carries out the reaction tRNA(Thr) + L-threonine + ATP = L-threonyl-tRNA(Thr) + AMP + diphosphate + H(+). Catalyzes the attachment of threonine to tRNA(Thr) in a two-step reaction: L-threonine is first activated by ATP to form Thr-AMP and then transferred to the acceptor end of tRNA(Thr). Also edits incorrectly charged L-seryl-tRNA(Thr). The polypeptide is Threonine--tRNA ligase (Helicobacter acinonychis (strain Sheeba)).